The following is a 393-amino-acid chain: Succinate--CoA ligase [ADP-forming] subunit beta (393 aa).

Residues 9–242 (KELFAKHGVP…RAATDPLEWK (234 aa)) enclose the ATP-grasp domain. Residues Lys45, 52-54 (GRG), Ser94, and Glu99 contribute to the ATP site. Mg(2+)-binding residues include Asn191 and Asp211. Substrate-binding positions include Asn262 and 324-326 (GIT).

It belongs to the succinate/malate CoA ligase beta subunit family. As to quaternary structure, heterotetramer of two alpha and two beta subunits. Requires Mg(2+) as cofactor.

The enzyme catalyses succinate + ATP + CoA = succinyl-CoA + ADP + phosphate. It catalyses the reaction GTP + succinate + CoA = succinyl-CoA + GDP + phosphate. It functions in the pathway carbohydrate metabolism; tricarboxylic acid cycle; succinate from succinyl-CoA (ligase route): step 1/1. Its function is as follows. Succinyl-CoA synthetase functions in the citric acid cycle (TCA), coupling the hydrolysis of succinyl-CoA to the synthesis of either ATP or GTP and thus represents the only step of substrate-level phosphorylation in the TCA. The beta subunit provides nucleotide specificity of the enzyme and binds the substrate succinate, while the binding sites for coenzyme A and phosphate are found in the alpha subunit. This chain is Succinate--CoA ligase [ADP-forming] subunit beta, found in Mycobacterium leprae (strain Br4923).